The following is a 27-amino-acid chain: MIKPDGVQRGLVGEIISRGDFAIDIGR.

Lysine 3 lines the ATP pocket.

It belongs to the NDK family. It depends on Mg(2+) as a cofactor.

It catalyses the reaction a 2'-deoxyribonucleoside 5'-diphosphate + ATP = a 2'-deoxyribonucleoside 5'-triphosphate + ADP. The catalysed reaction is a ribonucleoside 5'-diphosphate + ATP = a ribonucleoside 5'-triphosphate + ADP. Functionally, major role in the synthesis of nucleoside triphosphates other than ATP. The ATP gamma phosphate is transferred to the NDP beta phosphate via a ping-pong mechanism, using a phosphorylated active-site intermediate. This Pseudotsuga menziesii (Douglas-fir) protein is Nucleoside diphosphate kinase 2.